Here is a 1368-residue protein sequence, read N- to C-terminus: DNA-directed RNA polymerase subunit beta (1368 aa).

The protein belongs to the RNA polymerase beta chain family. As to quaternary structure, the RNAP catalytic core consists of 2 alpha, 1 beta, 1 beta' and 1 omega subunit. When a sigma factor is associated with the core the holoenzyme is formed, which can initiate transcription.

The catalysed reaction is RNA(n) + a ribonucleoside 5'-triphosphate = RNA(n+1) + diphosphate. Its function is as follows. DNA-dependent RNA polymerase catalyzes the transcription of DNA into RNA using the four ribonucleoside triphosphates as substrates. The sequence is that of DNA-directed RNA polymerase subunit beta from Burkholderia pseudomallei (strain K96243).